A 341-amino-acid polypeptide reads, in one-letter code: L-threonine 3-dehydrogenase (341 aa).

Residue cysteine 38 coordinates Zn(2+). Residues threonine 40 and histidine 43 each act as charge relay system in the active site. Histidine 63, glutamate 64, cysteine 93, cysteine 96, cysteine 99, and cysteine 107 together coordinate Zn(2+). NAD(+) contacts are provided by residues isoleucine 175, aspartate 195, arginine 200, 262 to 264 (LGI), and 286 to 287 (IY).

Belongs to the zinc-containing alcohol dehydrogenase family. Homotetramer. Requires Zn(2+) as cofactor.

It localises to the cytoplasm. The catalysed reaction is L-threonine + NAD(+) = (2S)-2-amino-3-oxobutanoate + NADH + H(+). Its pathway is amino-acid degradation; L-threonine degradation via oxydo-reductase pathway; glycine from L-threonine: step 1/2. Catalyzes the NAD(+)-dependent oxidation of L-threonine to 2-amino-3-ketobutyrate. This Shewanella sediminis (strain HAW-EB3) protein is L-threonine 3-dehydrogenase.